The sequence spans 200 residues: ATP-dependent Clp protease proteolytic subunit (200 aa).

Serine 102 functions as the Nucleophile in the catalytic mechanism. The active site involves histidine 127.

Belongs to the peptidase S14 family. Fourteen ClpP subunits assemble into 2 heptameric rings which stack back to back to give a disk-like structure with a central cavity, resembling the structure of eukaryotic proteasomes.

The protein localises to the cytoplasm. It catalyses the reaction Hydrolysis of proteins to small peptides in the presence of ATP and magnesium. alpha-casein is the usual test substrate. In the absence of ATP, only oligopeptides shorter than five residues are hydrolyzed (such as succinyl-Leu-Tyr-|-NHMec, and Leu-Tyr-Leu-|-Tyr-Trp, in which cleavage of the -Tyr-|-Leu- and -Tyr-|-Trp bonds also occurs).. Its function is as follows. Cleaves peptides in various proteins in a process that requires ATP hydrolysis. Has a chymotrypsin-like activity. Plays a major role in the degradation of misfolded proteins. In Dehalococcoides mccartyi (strain ATCC BAA-2100 / JCM 16839 / KCTC 5957 / BAV1), this protein is ATP-dependent Clp protease proteolytic subunit.